Consider the following 166-residue polypeptide: NAD(P)H-quinone oxidoreductase subunit I, chloroplastic (166 aa).

4Fe-4S ferredoxin-type domains follow at residues 55–84 (GRIHFEFDKCIACEVCVRVCPIDLPVVDWK) and 95–124 (LNYSIDFGICIFCGNCVEYCPTNCLSMTEE). [4Fe-4S] cluster contacts are provided by Cys-64, Cys-67, Cys-70, Cys-74, Cys-104, Cys-107, Cys-110, and Cys-114.

It belongs to the complex I 23 kDa subunit family. In terms of assembly, NDH is composed of at least 16 different subunits, 5 of which are encoded in the nucleus. The cofactor is [4Fe-4S] cluster.

It is found in the plastid. The protein localises to the chloroplast thylakoid membrane. It carries out the reaction a plastoquinone + NADH + (n+1) H(+)(in) = a plastoquinol + NAD(+) + n H(+)(out). It catalyses the reaction a plastoquinone + NADPH + (n+1) H(+)(in) = a plastoquinol + NADP(+) + n H(+)(out). NDH shuttles electrons from NAD(P)H:plastoquinone, via FMN and iron-sulfur (Fe-S) centers, to quinones in the photosynthetic chain and possibly in a chloroplast respiratory chain. The immediate electron acceptor for the enzyme in this species is believed to be plastoquinone. Couples the redox reaction to proton translocation, and thus conserves the redox energy in a proton gradient. The sequence is that of NAD(P)H-quinone oxidoreductase subunit I, chloroplastic from Guardiola tulocarpus.